Reading from the N-terminus, the 74-residue chain is Control protein C.MunI (74 aa).

An HTH cro/C1-type domain is found at 12–67 (LKKLRKEKTDLSQESFAAQIDLDRTYYSSIENGKRNVSLVNLEKISAGLGITLSEL). Positions 23–42 (SQESFAAQIDLDRTYYSSIE) form a DNA-binding region, H-T-H motif.

Functionally, probably controls expression of its associated restriction-modification system MunI. This chain is Control protein C.MunI, found in Mycoplasma sp.